The chain runs to 750 residues: DDT domain-containing protein DDR4 (750 aa).

The segment at 1 to 125 (MGSSSDIVPD…ITSLVPPPEP (125 aa)) is disordered. Positions 45–54 (RAQQRLQELQ) are enriched in low complexity. Residues 55–77 (AAERKLKPPKKEYKREQHRRREE) show a composition bias toward basic and acidic residues. A compositionally biased stretch (acidic residues) spans 78–100 (VVEEDEDSEDDDQEDEENDGDDE). The region spanning 133–192 (LRSMWELASVLNFLHVFRPLLKINAEFSAEEFETALLTPNDTLSDIHIPLLKAIPPVTRM) is the DDT domain. Disordered stretches follow at residues 450 to 505 (NGRS…TDFV) and 532 to 750 (LKKR…TDNS). A compositionally biased stretch (polar residues) spans 451–471 (GRSTSSTHPTEPVNDTASGRS). Residues 545-585 (EGDEEKGDEEYKWDEDNAEYEEEEEEEEEEDSLSASEEDSD) show a composition bias toward acidic residues. Over residues 595–606 (RRETKLRSRSND) the composition is skewed to basic and acidic residues. Over residues 688 to 707 (NADTTNGKENNQLNKSNGTT) the composition is skewed to polar residues. A compositionally biased stretch (basic and acidic residues) spans 741–750 (LKDDDKTDNS).

As to quaternary structure, interacts (via the DDT domain) with CHR11 (via C-terminus).

It localises to the nucleus. Probable transcription regulator. The polypeptide is DDT domain-containing protein DDR4 (Arabidopsis thaliana (Mouse-ear cress)).